A 547-amino-acid chain; its full sequence is Beta,beta-carotene 15,15'-dioxygenase (547 aa).

Fe cation contacts are provided by His172, His237, His308, and His514. The segment covering Gln528–Asp540 has biased composition (basic and acidic residues). Residues Gln528–Thr547 are disordered.

Belongs to the carotenoid oxygenase family. It depends on Fe(2+) as a cofactor. As to expression, highly expressed in retinal pigment epithelium. Also expressed in kidney, testis, liver, brain, small intestine and colon.

It localises to the cytoplasm. The protein localises to the cytosol. The catalysed reaction is all-trans-beta-carotene + O2 = 2 all-trans-retinal. Its pathway is cofactor metabolism; retinol metabolism. Functionally, symmetrically cleaves beta-carotene into two molecules of retinal using a dioxygenase mechanism. The polypeptide is Beta,beta-carotene 15,15'-dioxygenase (Homo sapiens (Human)).